Consider the following 181-residue polypeptide: Proteinase inhibitor B (181 aa).

A signal peptide spans 1-24 (MAASNALLLISGALLISLAVLCQG). 3 disulfide bridges follow: Cys-67-Cys-113, Cys-134-Cys-143, and Cys-136-Cys-139.

The protein belongs to the protease inhibitor I3 (leguminous Kunitz-type inhibitor) family.

It localises to the secreted. Its function is as follows. Possesses two reactive sites. Inhibits two molecules of trypsin simultaneously. Inhibits efficiently kallikrein, but chymotrypsin weakly. This is Proteinase inhibitor B from Sagittaria sagittifolia (Arrowhead).